A 527-amino-acid chain; its full sequence is Light-independent protochlorophyllide reductase subunit B (527 aa).

Residue Asp-36 participates in [4Fe-4S] cluster binding. Asp-292 (proton donor) is an active-site residue. Residue Gly-428 to Leu-429 participates in substrate binding.

The protein belongs to the ChlB/BchB/BchZ family. As to quaternary structure, protochlorophyllide reductase is composed of three subunits; BchL, BchN and BchB. Forms a heterotetramer of two BchB and two BchN subunits. The cofactor is [4Fe-4S] cluster.

It catalyses the reaction chlorophyllide a + oxidized 2[4Fe-4S]-[ferredoxin] + 2 ADP + 2 phosphate = protochlorophyllide a + reduced 2[4Fe-4S]-[ferredoxin] + 2 ATP + 2 H2O. It participates in porphyrin-containing compound metabolism; bacteriochlorophyll biosynthesis (light-independent). Component of the dark-operative protochlorophyllide reductase (DPOR) that uses Mg-ATP and reduced ferredoxin to reduce ring D of protochlorophyllide (Pchlide) to form chlorophyllide a (Chlide). This reaction is light-independent. The NB-protein (BchN-BchB) is the catalytic component of the complex. The polypeptide is Light-independent protochlorophyllide reductase subunit B (Chlorobium phaeovibrioides (strain DSM 265 / 1930) (Prosthecochloris vibrioformis (strain DSM 265))).